Reading from the N-terminus, the 393-residue chain is Erythronate-4-phosphate dehydrogenase (393 aa).

Residues serine 57 and threonine 79 each coordinate substrate. Aspartate 159 is an NAD(+) binding site. Arginine 229 is an active-site residue. Aspartate 253 is a binding site for NAD(+). The active site involves glutamate 258. Histidine 275 serves as the catalytic Proton donor. Glycine 278 contacts NAD(+). Tyrosine 279 serves as a coordination point for substrate.

It belongs to the D-isomer specific 2-hydroxyacid dehydrogenase family. PdxB subfamily. In terms of assembly, homodimer.

Its subcellular location is the cytoplasm. The enzyme catalyses 4-phospho-D-erythronate + NAD(+) = (R)-3-hydroxy-2-oxo-4-phosphooxybutanoate + NADH + H(+). It functions in the pathway cofactor biosynthesis; pyridoxine 5'-phosphate biosynthesis; pyridoxine 5'-phosphate from D-erythrose 4-phosphate: step 2/5. Its function is as follows. Catalyzes the oxidation of erythronate-4-phosphate to 3-hydroxy-2-oxo-4-phosphonooxybutanoate. The chain is Erythronate-4-phosphate dehydrogenase from Colwellia psychrerythraea (strain 34H / ATCC BAA-681) (Vibrio psychroerythus).